The sequence spans 153 residues: Subtilisin propeptide-like protein (153 aa).

The N-terminal stretch at 1–27 is a signal peptide; sequence MKFLFAFNFFSLYIYLYEFLCIHLCGS. The dispensable for parasite growth in host erythrocytes stretch occupies residues 127 to 153; that stretch reads QISHLSEFIQYLLNKNVCIEFNQNVML.

Its subcellular location is the secreted. The protein localises to the parasitophorous vacuole lumen. The protein resides in the cell membrane. In terms of biological role, acts as a specific inhibitor of subtilisin-like protease SUB1. The polypeptide is Subtilisin propeptide-like protein (Plasmodium falciparum (isolate 3D7)).